The sequence spans 348 residues: Uroporphyrinogen decarboxylase (348 aa).

Substrate-binding positions include 27 to 31, Phe-46, Asp-76, Tyr-152, Ser-207, and His-320; that span reads RQAGR.

The protein belongs to the uroporphyrinogen decarboxylase family. In terms of assembly, homodimer.

The protein localises to the cytoplasm. It carries out the reaction uroporphyrinogen III + 4 H(+) = coproporphyrinogen III + 4 CO2. The protein operates within porphyrin-containing compound metabolism; protoporphyrin-IX biosynthesis; coproporphyrinogen-III from 5-aminolevulinate: step 4/4. Functionally, catalyzes the decarboxylation of four acetate groups of uroporphyrinogen-III to yield coproporphyrinogen-III. The chain is Uroporphyrinogen decarboxylase from Bacillus cereus (strain AH820).